Here is a 122-residue protein sequence, read N- to C-terminus: Large ribosomal subunit protein uL14c (122 aa).

This sequence belongs to the universal ribosomal protein uL14 family. In terms of assembly, part of the 50S ribosomal subunit.

The protein localises to the plastid. The protein resides in the chloroplast. Its function is as follows. Binds to 23S rRNA. This is Large ribosomal subunit protein uL14c from Chaetosphaeridium globosum (Charophycean green alga).